Reading from the N-terminus, the 720-residue chain is Serine/threonine-protein kinase KIN82 (720 aa).

2 stretches are compositionally biased toward polar residues: residues 1–13 (MTQQEYRSPSQRL) and 99–116 (FNHNRSKSSGTTDASTSE). Disordered regions lie at residues 1–20 (MTQQEYRSPSQRLSKGRSMS) and 99–128 (FNHNRSKSSGTTDASTSEKGTHKREPRSTI). Phosphoserine is present on Ser-203. The segment covering 230–241 (SPLANLSLSNSP) has biased composition (low complexity). A disordered region spans residues 230 to 257 (SPLANLSLSNSPIDSPRKNSETRKDQIP). The segment covering 244–255 (SPRKNSETRKDQ) has biased composition (basic and acidic residues). The Protein kinase domain maps to 324–602 (FEKIRLLGQG…AADIKRHPFF (279 aa)). ATP contacts are provided by residues 330–338 (LGQGDVGKV) and Lys-353. Asp-449 acts as the Proton acceptor in catalysis.

The protein belongs to the protein kinase superfamily. Ser/Thr protein kinase family. KIN82 subfamily.

The catalysed reaction is L-seryl-[protein] + ATP = O-phospho-L-seryl-[protein] + ADP + H(+). It catalyses the reaction L-threonyl-[protein] + ATP = O-phospho-L-threonyl-[protein] + ADP + H(+). Flippase activator that phosphorylates DFN1 and DFN2 and which is involved in the generation of phospholipid asymmetry in membranes by the inward translocation of phospholipids. The sequence is that of Serine/threonine-protein kinase KIN82 (KIN82) from Saccharomyces cerevisiae (strain ATCC 204508 / S288c) (Baker's yeast).